The chain runs to 111 residues: Phosphoribosyl-ATP pyrophosphatase (111 aa).

This sequence belongs to the PRA-PH family.

The protein resides in the cytoplasm. It catalyses the reaction 1-(5-phospho-beta-D-ribosyl)-ATP + H2O = 1-(5-phospho-beta-D-ribosyl)-5'-AMP + diphosphate + H(+). The protein operates within amino-acid biosynthesis; L-histidine biosynthesis; L-histidine from 5-phospho-alpha-D-ribose 1-diphosphate: step 2/9. This chain is Phosphoribosyl-ATP pyrophosphatase, found in Alcanivorax borkumensis (strain ATCC 700651 / DSM 11573 / NCIMB 13689 / SK2).